The chain runs to 365 residues: Succinyl-diaminopimelate desuccinylase (365 aa).

Zn(2+) is bound at residue histidine 64. Aspartate 66 is a catalytic residue. Aspartate 95 serves as a coordination point for Zn(2+). Residue glutamate 125 is the Proton acceptor of the active site. Positions 126, 154, and 339 each coordinate Zn(2+).

Belongs to the peptidase M20A family. DapE subfamily. In terms of assembly, homodimer. It depends on Zn(2+) as a cofactor. Co(2+) is required as a cofactor.

It catalyses the reaction N-succinyl-(2S,6S)-2,6-diaminopimelate + H2O = (2S,6S)-2,6-diaminopimelate + succinate. The protein operates within amino-acid biosynthesis; L-lysine biosynthesis via DAP pathway; LL-2,6-diaminopimelate from (S)-tetrahydrodipicolinate (succinylase route): step 3/3. Functionally, catalyzes the hydrolysis of N-succinyl-L,L-diaminopimelic acid (SDAP), forming succinate and LL-2,6-diaminopimelate (DAP), an intermediate involved in the bacterial biosynthesis of lysine and meso-diaminopimelic acid, an essential component of bacterial cell walls. The polypeptide is Succinyl-diaminopimelate desuccinylase (Nautilia profundicola (strain ATCC BAA-1463 / DSM 18972 / AmH)).